The following is a 148-amino-acid chain: Large ribosomal subunit protein bL9 (148 aa).

It belongs to the bacterial ribosomal protein bL9 family.

Functionally, binds to the 23S rRNA. The protein is Large ribosomal subunit protein bL9 of Syntrophotalea carbinolica (strain DSM 2380 / NBRC 103641 / GraBd1) (Pelobacter carbinolicus).